We begin with the raw amino-acid sequence, 318 residues long: NADH-quinone oxidoreductase subunit H 2 (318 aa).

A run of 9 helical transmembrane segments spans residues 4 to 24 (LLIA…AGVF), 77 to 97 (LAPA…AFAP), 106 to 126 (VGVL…VLGA), 146 to 166 (LAYE…AGSF), 179 to 199 (LWFI…GLAA), 214 to 234 (LVAG…FLGE), 238 to 258 (ILLV…GPIL), 262 to 282 (VWFG…RAAL), and 293 to 313 (FAWK…AWIA).

This sequence belongs to the complex I subunit 1 family. As to quaternary structure, NDH-1 is composed of 14 different subunits. Subunits NuoA, H, J, K, L, M, N constitute the membrane sector of the complex.

It localises to the cell inner membrane. It catalyses the reaction a quinone + NADH + 5 H(+)(in) = a quinol + NAD(+) + 4 H(+)(out). In terms of biological role, NDH-1 shuttles electrons from NADH, via FMN and iron-sulfur (Fe-S) centers, to quinones in the respiratory chain. The immediate electron acceptor for the enzyme in this species is believed to be ubiquinone. Couples the redox reaction to proton translocation (for every two electrons transferred, four hydrogen ions are translocated across the cytoplasmic membrane), and thus conserves the redox energy in a proton gradient. This subunit may bind ubiquinone. This Cereibacter sphaeroides (strain ATCC 17029 / ATH 2.4.9) (Rhodobacter sphaeroides) protein is NADH-quinone oxidoreductase subunit H 2.